A 121-amino-acid chain; its full sequence is NADH-ubiquinone oxidoreductase chain 3 (121 aa).

The next 3 helical transmembrane spans lie at 11-31 (ILTF…LSYF), 63-83 (FYLV…LFPW), and 90-110 (LSIF…LGFI).

The protein belongs to the complex I subunit 3 family.

The protein resides in the mitochondrion membrane. The catalysed reaction is a ubiquinone + NADH + 5 H(+)(in) = a ubiquinol + NAD(+) + 4 H(+)(out). Core subunit of the mitochondrial membrane respiratory chain NADH dehydrogenase (Complex I) that is believed to belong to the minimal assembly required for catalysis. Complex I functions in the transfer of electrons from NADH to the respiratory chain. The immediate electron acceptor for the enzyme is believed to be ubiquinone. This is NADH-ubiquinone oxidoreductase chain 3 (NAD3) from Porphyra purpurea (Red seaweed).